The primary structure comprises 408 residues: LysM domain-containing protein ARB_01488 (408 aa).

An N-terminal signal peptide occupies residues 1–17 (MVKYALLPLVAVSLVQA). Positions 42–91 (SWINVVDASGKLTCDAFLDTINVAKRQFIFWNPQLNSDCSNIQSKASYCA) constitute a LysM 1 domain. The segment at 98–178 (SKQTRGQMDP…HGPKEAPPPD (81 aa)) is disordered. Positions 106-116 (DPPPKTKPLPP) are enriched in pro residues. LysM domains lie at 270–320 (QYHT…RVCV) and 360–406 (SFEL…YACV).

The protein localises to the secreted. Might have a role in sequestration of chitin oligosaccharides (breakdown products of fungal cell walls that are released during invasion and act as triggers of host immunity) to dampen host defense. This Arthroderma benhamiae (strain ATCC MYA-4681 / CBS 112371) (Trichophyton mentagrophytes) protein is LysM domain-containing protein ARB_01488.